The sequence spans 344 residues: Photosystem II protein D1 (344 aa).

Thr-2 carries the N-acetylthreonine modification. Position 2 is a phosphothreonine (Thr-2). The next 3 helical transmembrane spans lie at 29–46, 118–133, and 142–156; these read YIGW…TATS, HFLL…EWEL, and WIAV…AATA. Chlorophyll a is bound at residue His-118. Residue Tyr-126 coordinates pheophytin a. Positions 170 and 189 each coordinate [CaMn4O5] cluster. The chain crosses the membrane as a helical span at residues 197–218; the sequence is FHMLGVAGVFGGSLFSAMHGSL. His-198 serves as a coordination point for chlorophyll a. Residues His-215 and 264-265 each bind a quinone; that span reads SF. His-215 lines the Fe cation pocket. His-272 contributes to the Fe cation binding site. Residues 274 to 288 form a helical membrane-spanning segment; the sequence is FLAAWPVVCIWFTAL. Residues His-332, Glu-333, Asp-342, and Ala-344 each coordinate [CaMn4O5] cluster.

The protein belongs to the reaction center PufL/M/PsbA/D family. In terms of assembly, PSII is composed of 1 copy each of membrane proteins PsbA, PsbB, PsbC, PsbD, PsbE, PsbF, PsbH, PsbI, PsbJ, PsbK, PsbL, PsbM, PsbT, PsbX, PsbY, PsbZ, Psb30/Ycf12, at least 3 peripheral proteins of the oxygen-evolving complex and a large number of cofactors. It forms dimeric complexes. It depends on The D1/D2 heterodimer binds P680, chlorophylls that are the primary electron donor of PSII, and subsequent electron acceptors. It shares a non-heme iron and each subunit binds pheophytin, quinone, additional chlorophylls, carotenoids and lipids. D1 provides most of the ligands for the Mn4-Ca-O5 cluster of the oxygen-evolving complex (OEC). There is also a Cl(-1) ion associated with D1 and D2, which is required for oxygen evolution. The PSII complex binds additional chlorophylls, carotenoids and specific lipids. as a cofactor. Tyr-161 forms a radical intermediate that is referred to as redox-active TyrZ, YZ or Y-Z.

The protein resides in the plastid. It localises to the chloroplast thylakoid membrane. The catalysed reaction is 2 a plastoquinone + 4 hnu + 2 H2O = 2 a plastoquinol + O2. Functionally, photosystem II (PSII) is a light-driven water:plastoquinone oxidoreductase that uses light energy to abstract electrons from H(2)O, generating O(2) and a proton gradient subsequently used for ATP formation. It consists of a core antenna complex that captures photons, and an electron transfer chain that converts photonic excitation into a charge separation. The D1/D2 (PsbA/PsbD) reaction center heterodimer binds P680, the primary electron donor of PSII as well as several subsequent electron acceptors. The sequence is that of Photosystem II protein D1 from Staurastrum punctulatum (Green alga).